The chain runs to 260 residues: Putative ABC transporter ATP-binding protein PF0068 (260 aa).

The 233-residue stretch at 2-234 folds into the ABC transporter domain; the sequence is IEVKGVWFWY…DLKRYKLEEP (233 aa). Position 34-41 (34-41) interacts with ATP; sequence GPNGSGKT.

It belongs to the ABC transporter superfamily.

The protein resides in the cell membrane. Its function is as follows. Probably part of an ABC transporter complex. Responsible for energy coupling to the transport system. This chain is Putative ABC transporter ATP-binding protein PF0068, found in Pyrococcus furiosus (strain ATCC 43587 / DSM 3638 / JCM 8422 / Vc1).